The chain runs to 98 residues: Large ribosomal subunit protein uL23 (98 aa).

This sequence belongs to the universal ribosomal protein uL23 family. Part of the 50S ribosomal subunit. Contacts protein L29, and trigger factor when it is bound to the ribosome.

In terms of biological role, one of the early assembly proteins it binds 23S rRNA. One of the proteins that surrounds the polypeptide exit tunnel on the outside of the ribosome. Forms the main docking site for trigger factor binding to the ribosome. This chain is Large ribosomal subunit protein uL23, found in Lactobacillus gasseri (strain ATCC 33323 / DSM 20243 / BCRC 14619 / CIP 102991 / JCM 1131 / KCTC 3163 / NCIMB 11718 / NCTC 13722 / AM63).